Consider the following 152-residue polypeptide: 6,7-dimethyl-8-ribityllumazine synthase (152 aa).

Residues phenylalanine 22, 56–58 (AFE), and 79–81 (AVI) each bind 5-amino-6-(D-ribitylamino)uracil. Residue 84–85 (AT) coordinates (2S)-2-hydroxy-3-oxobutyl phosphate. The Proton donor role is filled by histidine 87. Phenylalanine 112 lines the 5-amino-6-(D-ribitylamino)uracil pocket. Arginine 126 contacts (2S)-2-hydroxy-3-oxobutyl phosphate.

The protein belongs to the DMRL synthase family.

It carries out the reaction (2S)-2-hydroxy-3-oxobutyl phosphate + 5-amino-6-(D-ribitylamino)uracil = 6,7-dimethyl-8-(1-D-ribityl)lumazine + phosphate + 2 H2O + H(+). The protein operates within cofactor biosynthesis; riboflavin biosynthesis; riboflavin from 2-hydroxy-3-oxobutyl phosphate and 5-amino-6-(D-ribitylamino)uracil: step 1/2. Functionally, catalyzes the formation of 6,7-dimethyl-8-ribityllumazine by condensation of 5-amino-6-(D-ribitylamino)uracil with 3,4-dihydroxy-2-butanone 4-phosphate. This is the penultimate step in the biosynthesis of riboflavin. The protein is 6,7-dimethyl-8-ribityllumazine synthase of Carboxydothermus hydrogenoformans (strain ATCC BAA-161 / DSM 6008 / Z-2901).